A 151-amino-acid chain; its full sequence is Ribonuclease H (151 aa).

One can recognise an RNase H type-1 domain in the interval 1–141 (MQEVTVYSDG…ADALANKGVE (141 aa)). Asp-9, Glu-47, Asp-69, and Asp-133 together coordinate Mg(2+).

The protein belongs to the RNase H family. In terms of assembly, monomer. Mg(2+) is required as a cofactor.

Its subcellular location is the cytoplasm. The enzyme catalyses Endonucleolytic cleavage to 5'-phosphomonoester.. Functionally, endonuclease that specifically degrades the RNA of RNA-DNA hybrids. The polypeptide is Ribonuclease H (Ralstonia nicotianae (strain ATCC BAA-1114 / GMI1000) (Ralstonia solanacearum)).